A 163-amino-acid chain; its full sequence is 3-isopropylmalate dehydratase small subunit (163 aa).

This sequence belongs to the LeuD family. LeuD type 2 subfamily. In terms of assembly, heterodimer of LeuC and LeuD.

The catalysed reaction is (2R,3S)-3-isopropylmalate = (2S)-2-isopropylmalate. It functions in the pathway amino-acid biosynthesis; L-leucine biosynthesis; L-leucine from 3-methyl-2-oxobutanoate: step 2/4. Catalyzes the isomerization between 2-isopropylmalate and 3-isopropylmalate, via the formation of 2-isopropylmaleate. The chain is 3-isopropylmalate dehydratase small subunit from Clostridioides difficile (strain 630) (Peptoclostridium difficile).